We begin with the raw amino-acid sequence, 276 residues long: Vitamin B12-binding protein (276 aa).

The first 20 residues, 1–20, serve as a signal peptide directing secretion; that stretch reads MIVRFLCWLTGLLLCTAAYA. A Fe/B12 periplasmic-binding domain is found at 24–273; the sequence is RVISLAPHAT…QLTALSPGSS (250 aa). Cys-186 and Cys-262 form a disulfide bridge.

The protein belongs to the BtuF family. As to quaternary structure, the complex is composed of two ATP-binding proteins (BtuD), two transmembrane proteins (BtuC) and a solute-binding protein (BtuF).

Its subcellular location is the periplasm. Its function is as follows. Part of the ABC transporter complex BtuCDF involved in vitamin B12 import. Binds vitamin B12 and delivers it to the periplasmic surface of BtuC. In Pectobacterium carotovorum subsp. carotovorum (strain PC1), this protein is Vitamin B12-binding protein.